We begin with the raw amino-acid sequence, 90 residues long: Progonadoliberin-3 (90 aa).

Positions 1–23 (MEANSRVMVRVLLLALVVQVTLS) are cleaved as a signal peptide. Residue Q24 is modified to Pyrrolidone carboxylic acid. Position 33 is a glycine amide (G33). The disordered stretch occupies residues 56–90 (LPEEASAQTQERLRPYNVINDDSSHFDRKKRSPNK).

This sequence belongs to the GnRH family.

Its subcellular location is the secreted. Stimulates the secretion of gonadotropins. The chain is Progonadoliberin-3 (gnrh3) from Dicentrarchus labrax (European seabass).